Reading from the N-terminus, the 265-residue chain is Thiamine thiazole synthase (265 aa).

NAD(+)-binding positions include alanine 43, 62–63 (ER), glycine 70, valine 134, and 162–164 (HVD). Aspartate 164 and histidine 179 together coordinate Fe cation. Methionine 229 lines the NAD(+) pocket. Arginine 239 serves as a coordination point for glycine.

The protein belongs to the THI4 family. Homooctamer; tetramer of dimers. Requires Fe(2+) as cofactor.

The enzyme catalyses hydrogen sulfide + glycine + NAD(+) = ADP-5-ethyl-4-methylthiazole-2-carboxylate + nicotinamide + 3 H2O + H(+). The protein operates within cofactor biosynthesis; thiamine diphosphate biosynthesis. In terms of biological role, involved in the biosynthesis of the thiazole moiety of thiamine. Catalyzes the conversion of NAD and glycine to adenosine diphosphate 5-(2-hydroxyethyl)-4-methylthiazole-2-carboxylate (ADT), an adenylated thiazole intermediate, using free sulfide as a source of sulfur. This chain is Thiamine thiazole synthase, found in Sulfolobus acidocaldarius (strain ATCC 33909 / DSM 639 / JCM 8929 / NBRC 15157 / NCIMB 11770).